The sequence spans 572 residues: Flagellin B (572 aa).

Belongs to the bacterial flagellin family. In terms of assembly, heteromer of flaA and flaB.

It localises to the secreted. Its subcellular location is the bacterial flagellum. Flagellin is the subunit protein which polymerizes to form the filaments of bacterial flagella. In Campylobacter jejuni subsp. jejuni serotype O:2 (strain ATCC 700819 / NCTC 11168), this protein is Flagellin B (flaB).